Consider the following 124-residue polypeptide: Ribosome-binding factor A (124 aa).

The protein belongs to the RbfA family. As to quaternary structure, monomer. Binds 30S ribosomal subunits, but not 50S ribosomal subunits or 70S ribosomes.

It localises to the cytoplasm. Its function is as follows. One of several proteins that assist in the late maturation steps of the functional core of the 30S ribosomal subunit. Associates with free 30S ribosomal subunits (but not with 30S subunits that are part of 70S ribosomes or polysomes). Required for efficient processing of 16S rRNA. May interact with the 5'-terminal helix region of 16S rRNA. The chain is Ribosome-binding factor A from Buchnera aphidicola subsp. Schizaphis graminum (strain Sg).